We begin with the raw amino-acid sequence, 231 residues long: MGQMVEFEKNGVKVRGYIATPKWGGPGVIVIHEWWGLESPLSNIKEICDRFAQEGFVAFAPDFYEGKYADNPDDAGKLMTDMFENRMDKVDAIFKASVDFLKECRYTSPKKVGVTGFCCGGTLSMYFAGKFPDLIDASVPFYGLPQITKIDAENIKVPIFFILAEKDEFVNNDEVIDIAKKVWKNGVDVKVKVYSGVTHAFLNEKREDVYDPCRAQDAWNLTVAFFKEYLT.

The sequence is that of Protein usf (usf) from Aquifex pyrophilus.